The sequence spans 492 residues: Protein nucleotidyltransferase YdiU (492 aa).

ATP is bound by residues G91, G93, R94, K114, D126, G127, R180, and R187. D256 (proton acceptor) is an active-site residue. 2 residues coordinate Mg(2+): N257 and D266. D266 contacts ATP.

The protein belongs to the SELO family. Requires Mg(2+) as cofactor. It depends on Mn(2+) as a cofactor.

It catalyses the reaction L-seryl-[protein] + ATP = 3-O-(5'-adenylyl)-L-seryl-[protein] + diphosphate. The enzyme catalyses L-threonyl-[protein] + ATP = 3-O-(5'-adenylyl)-L-threonyl-[protein] + diphosphate. It carries out the reaction L-tyrosyl-[protein] + ATP = O-(5'-adenylyl)-L-tyrosyl-[protein] + diphosphate. The catalysed reaction is L-histidyl-[protein] + UTP = N(tele)-(5'-uridylyl)-L-histidyl-[protein] + diphosphate. It catalyses the reaction L-seryl-[protein] + UTP = O-(5'-uridylyl)-L-seryl-[protein] + diphosphate. The enzyme catalyses L-tyrosyl-[protein] + UTP = O-(5'-uridylyl)-L-tyrosyl-[protein] + diphosphate. Nucleotidyltransferase involved in the post-translational modification of proteins. It can catalyze the addition of adenosine monophosphate (AMP) or uridine monophosphate (UMP) to a protein, resulting in modifications known as AMPylation and UMPylation. This is Protein nucleotidyltransferase YdiU from Synechococcus sp. (strain ATCC 27144 / PCC 6301 / SAUG 1402/1) (Anacystis nidulans).